An 814-amino-acid polypeptide reads, in one-letter code: Putative E3 ubiquitin-protein ligase RF298 (814 aa).

3 disordered regions span residues 1-51 (MVEK…ASLT), 221-301 (SVSN…TKSA), and 411-441 (ALPA…STKP). The span at 221–231 (SVSNASKSSES) shows a compositional bias: low complexity. A compositionally biased stretch (polar residues) spans 289-301 (SVSTASGEGTKSA). A compositionally biased stretch (basic and acidic residues) spans 423 to 435 (SEKKSGSEPEEKP). The stretch at 506 to 710 (ELKALRKEKE…KLKSDSLKIA (205 aa)) forms a coiled coil. Residues 760–800 (CVMCLSEEMSVIFLPCAHQVLCSKCNQLHEKEAMEDCPSCR) form an RING-type zinc finger.

This sequence belongs to the RING-type zinc finger family.

The enzyme catalyses S-ubiquitinyl-[E2 ubiquitin-conjugating enzyme]-L-cysteine + [acceptor protein]-L-lysine = [E2 ubiquitin-conjugating enzyme]-L-cysteine + N(6)-ubiquitinyl-[acceptor protein]-L-lysine.. It participates in protein modification; protein ubiquitination. This Arabidopsis thaliana (Mouse-ear cress) protein is Putative E3 ubiquitin-protein ligase RF298 (RF298).